A 360-amino-acid chain; its full sequence is MNVKPATAKISSHALKQNLEIIKQKAPNSKIIAVVKANAYGHGVVFVASTLEQNVDCFGVARLEEALALRSNGITKPILLLEGFFNEQDLPILAVNNIETVVHNHEQLDALKRANLPSPIKVWLKIDTGMHRLGVALDEVDYFYQELKKLPQIQPHLGFVSHFSRADELESDYTQLQINRFLSVTKDKQGERTIAASGGILFWPKSHLECIRPGIIMYGISPTDTIGKEFGLTPVMNLTSSLIAVRHHKQGDPVGYGGIWTSPRDTKIGVVAMGYGDGYPRDVPEGTPVYLNGRLVPIVGRVSMDMLTVDLGADSQDLVGDEVILWGKELPIETVAKFTGILSYELITKLTPRVITEYVD.

Lysine 36 acts as the Proton acceptor; specific for D-alanine in catalysis. Lysine 36 is modified (N6-(pyridoxal phosphate)lysine). Arginine 132 provides a ligand contact to substrate. Tyrosine 256 acts as the Proton acceptor; specific for L-alanine in catalysis. Methionine 304 serves as a coordination point for substrate.

Belongs to the alanine racemase family. Pyridoxal 5'-phosphate serves as cofactor.

The catalysed reaction is L-alanine = D-alanine. It participates in amino-acid biosynthesis; D-alanine biosynthesis; D-alanine from L-alanine: step 1/1. Its function is as follows. Catalyzes the interconversion of L-alanine and D-alanine. May also act on other amino acids. This is Alanine racemase (alr) from Haemophilus influenzae (strain ATCC 51907 / DSM 11121 / KW20 / Rd).